Reading from the N-terminus, the 348-residue chain is Selenide, water dikinase (348 aa).

C17 is an active-site residue. Residues K20 and T47–D49 contribute to the ATP site. Position 50 (D50) interacts with Mg(2+). ATP is bound by residues D67, D90, and G138–T140. D90 contacts Mg(2+). Residue D226 participates in Mg(2+) binding.

The protein belongs to the selenophosphate synthase 1 family. Class I subfamily. As to quaternary structure, homodimer. Requires Mg(2+) as cofactor.

The enzyme catalyses hydrogenselenide + ATP + H2O = selenophosphate + AMP + phosphate + 2 H(+). Functionally, synthesizes selenophosphate from selenide and ATP. This Porphyromonas gingivalis (strain ATCC BAA-308 / W83) protein is Selenide, water dikinase.